A 226-amino-acid chain; its full sequence is uncharacterized protein (226 aa).

This sequence belongs to the IIV-6 350L family.

This is an uncharacterized protein from Invertebrate iridescent virus 3 (IIV-3).